We begin with the raw amino-acid sequence, 88 residues long: Elongation factor 1-beta (88 aa).

It belongs to the EF-1-beta/EF-1-delta family.

Its function is as follows. Promotes the exchange of GDP for GTP in EF-1-alpha/GDP, thus allowing the regeneration of EF-1-alpha/GTP that could then be used to form the ternary complex EF-1-alpha/GTP/AAtRNA. The sequence is that of Elongation factor 1-beta from Halorubrum lacusprofundi (strain ATCC 49239 / DSM 5036 / JCM 8891 / ACAM 34).